Reading from the N-terminus, the 332-residue chain is Biotin synthase (332 aa).

Residues 51–279 (YKVQLASLLS…LSRVRLSAGR (229 aa)) form the Radical SAM core domain. Cys66, Cys70, and Cys73 together coordinate [4Fe-4S] cluster. The [2Fe-2S] cluster site is built by Cys110, Cys142, Cys202, and Arg274.

Belongs to the radical SAM superfamily. Biotin synthase family. As to quaternary structure, homodimer. The cofactor is [4Fe-4S] cluster. Requires [2Fe-2S] cluster as cofactor.

It carries out the reaction (4R,5S)-dethiobiotin + (sulfur carrier)-SH + 2 reduced [2Fe-2S]-[ferredoxin] + 2 S-adenosyl-L-methionine = (sulfur carrier)-H + biotin + 2 5'-deoxyadenosine + 2 L-methionine + 2 oxidized [2Fe-2S]-[ferredoxin]. It participates in cofactor biosynthesis; biotin biosynthesis; biotin from 7,8-diaminononanoate: step 2/2. Its function is as follows. Catalyzes the conversion of dethiobiotin (DTB) to biotin by the insertion of a sulfur atom into dethiobiotin via a radical-based mechanism. The protein is Biotin synthase of Prochlorococcus marinus (strain MIT 9211).